The primary structure comprises 853 residues: Ion channel CASTOR (853 aa).

A compositionally biased stretch (low complexity) spans 1-30 (MSLDSEVSVSSSSGRDWFFPSPSFFRSSPS). The interval 1–55 (MSLDSEVSVSSSSGRDWFFPSPSFFRSSPSQYGRRFHTNSNTHSAPSSTYPSGIR) is disordered. Over residues 38-51 (TNSNTHSAPSSTYP) the composition is skewed to polar residues. Residues 96-116 (QFGLQFALVTLTIVFLLLLLL) form a helical membrane-spanning segment. A coiled-coil region spans residues 117 to 137 (RNTHLESQVNKLQGEILRLHA). Helical transmembrane passes span 168 to 188 (NLAL…FKYI), 227 to 247 (LVLL…LFGV), and 279 to 299 (LVAV…LGLV). RCK N-terminal domains lie at 320–461 (QNHT…ETVV) and 580–752 (PERI…DYVL).

It belongs to the castor/pollux (TC 1.A.1.23) family. In terms of assembly, homooligomer. As to expression, expressed in infected and uninfected roots, leaves, seed pods, and flower buds.

The protein resides in the nucleus membrane. Functionally, ion channel with a moderate preference for potassium over sodium and calcium. Involved in perinuclear calcium spiking but not in cytosolic calcium influx. Closed at negative voltages in presence of magnesium. Required for early signal transduction events leading to endosymbiosis. Acts early in a signal transduction chain leading from the perception of Nod factor to the activation of calcium spiking. Also involved in fungal entry into root epidermal cells during the establishment of the arbuscular mycorrhizal symbiosis. In Lotus japonicus (Lotus corniculatus var. japonicus), this protein is Ion channel CASTOR (CASTOR).